The following is a 456-amino-acid chain: IQ domain-containing protein IQM3 (456 aa).

The IQ domain maps to 46-75 (TRLAAVKVQKVYRSYRTRRRLADSVVVAEE). Residues 315–358 (SEDSDSYDDYVKSNGGSEPEPLKKEDTTFQAETETDENGNGTVG) form a disordered region.

Expressed in roots, rosette and cauline leaves, flowers and siliques, and at lower levels in stems.

It localises to the cytoplasm. Its subcellular location is the nucleus. May be involved in biotic and abiotic stress responses. The polypeptide is IQ domain-containing protein IQM3 (Arabidopsis thaliana (Mouse-ear cress)).